Reading from the N-terminus, the 288-residue chain is HTH-type transcriptional regulator CzcR (288 aa).

One can recognise an HTH lysR-type domain in the interval 1–58 (MELRDLQIFQSVADQGSVSSAAKELNYVQSNVTARIKQLENELKTPLFYRHKRGMTLT). The H-T-H motif DNA-binding region spans 18 to 37 (VSSAAKELNYVQSNVTARIK).

It belongs to the LysR transcriptional regulatory family.

The protein is HTH-type transcriptional regulator CzcR (czcR) of Bacillus anthracis.